Here is a 187-residue protein sequence, read N- to C-terminus: dITP/XTP pyrophosphatase (187 aa).

Residue 7–12 (TNNPYK) participates in substrate binding. Mg(2+) is bound by residues E36 and D65. D65 (proton acceptor) is an active-site residue. Substrate is bound by residues T66, 140 to 143 (FGYD), K163, and 168 to 169 (HR).

It belongs to the HAM1 NTPase family. As to quaternary structure, homodimer. The cofactor is Mg(2+).

The catalysed reaction is XTP + H2O = XMP + diphosphate + H(+). It catalyses the reaction dITP + H2O = dIMP + diphosphate + H(+). The enzyme catalyses ITP + H2O = IMP + diphosphate + H(+). In terms of biological role, pyrophosphatase that catalyzes the hydrolysis of nucleoside triphosphates to their monophosphate derivatives, with a high preference for the non-canonical purine nucleotides XTP (xanthosine triphosphate), dITP (deoxyinosine triphosphate) and ITP. Seems to function as a house-cleaning enzyme that removes non-canonical purine nucleotides from the nucleotide pool, thus preventing their incorporation into DNA/RNA and avoiding chromosomal lesions. This is dITP/XTP pyrophosphatase from Pyrobaculum aerophilum (strain ATCC 51768 / DSM 7523 / JCM 9630 / CIP 104966 / NBRC 100827 / IM2).